We begin with the raw amino-acid sequence, 927 residues long: Heat shock protein hsp98 (927 aa).

In terms of domain architecture, Clp R spans 2-162 (TSKMEFTDRA…TDAIQAIRGT (161 aa)). Repeat regions lie at residues 7 to 87 (FTDR…LVRL) and 99 to 162 (MAPS…IRGT). The tract at residues 179 to 428 (LAKFTIDMTA…AVRVARESQP (250 aa)) is NBD1. 224 to 231 (GEPGVGKT) lines the ATP pocket. Positions 429–553 (EIIDSLERKL…AALNAAAAET (125 aa)) form a coiled coil. The tract at residues 454–473 (EASKARLEQAKKDAENVEEE) is disordered. Residues 562–752 (VGPDQINEIV…IVVMTSNLGA (191 aa)) form an NBD2 region. An ATP-binding site is contributed by 635–642 (GPSGTGKT). A disordered region spans residues 908-927 (EDAVDEVAPESEMDEDLYDD).

The protein belongs to the ClpA/ClpB family. Homohexamer, forming a ring with a central pore.

It is found in the cytoplasm. The protein localises to the nucleus. Its function is as follows. Required, in concert with Hsp40 and Hsp70 and small Hsps, for the dissociation, resolubilization and refolding of aggregates of damaged proteins after heat or other environmental stresses. Extracts proteins from aggregates by unfolding and threading them in an ATP-dependent process through the axial channel of the protein hexamer, after which they can be refolded by components of the Hsp70/Hsp40 chaperone system. The sequence is that of Heat shock protein hsp98 (hsp98) from Neurospora crassa (strain ATCC 24698 / 74-OR23-1A / CBS 708.71 / DSM 1257 / FGSC 987).